The chain runs to 956 residues: GAS2-like protein 2B (956 aa).

The region spanning 23–150 is the Calponin-homology (CH) domain; that stretch reads YAMKEDLAEW…CLLELARRAS (128 aa). The 73-residue stretch at 191–263 folds into the GAR domain; the sequence is CDFKNLDQMV…HYLDKHDPCH (73 aa). Polar residues-rich tracts occupy residues 332-353 and 381-390; these read SSSYSLDDNENSPSFKNSQTPP and DPQQLGNPQS. 4 disordered regions span residues 332–361, 378–406, 853–885, and 914–956; these read SSSYSLDDNENSPSFKNSQTPPNDRRSMSI, DTQDPQQLGNPQSGHYRHHHSTSSLASQL, RPKIRPRRDNRPEKKPSRIPTPVSYRQVPSRNN, and VNSE…ESWV. Residues 859-868 show a composition bias toward basic and acidic residues; the sequence is RRDNRPEKKP.

Belongs to the GAS2 family.

Its subcellular location is the cytoplasm. It is found in the cytoskeleton. The protein localises to the cilium basal body. Its function is as follows. Together with gas2l2.L, regulates ciliary orientation and performance. This Xenopus laevis (African clawed frog) protein is GAS2-like protein 2B.